We begin with the raw amino-acid sequence, 484 residues long: Major extracellular endoglucanase (484 aa).

The signal sequence occupies residues 1 to 25 (MSIFRTASTLALATALALAAGPAFS). The active-site Proton donor is glutamate 182. Glutamate 303 (nucleophile) is an active-site residue. A disordered region spans residues 370 to 402 (GTAGNTTPTPTPTPTPTPTPTPTPTPTPTPGTS). The interval 375 to 399 (TTPTPTPTPTPTPTPTPTPTPTPTP) is thr-Pro repeats ('hinge') (Pro-Thr box). Pro residues predominate over residues 378–398 (TPTPTPTPTPTPTPTPTPTPT). A CBM2 domain is found at 395–484 (PTPTPGTSTF…TAEFGFCAAS (90 aa)).

This sequence belongs to the glycosyl hydrolase 5 (cellulase A) family.

The catalysed reaction is Endohydrolysis of (1-&gt;4)-beta-D-glucosidic linkages in cellulose, lichenin and cereal beta-D-glucans.. The protein is Major extracellular endoglucanase (engXCA) of Xanthomonas campestris pv. campestris (strain ATCC 33913 / DSM 3586 / NCPPB 528 / LMG 568 / P 25).